The sequence spans 646 residues: Cell surface glycoprotein MUC18 (646 aa).

The first 23 residues, 1 to 23, serve as a signal peptide directing secretion; sequence MGLPRLVCAFLLAACCCCPRVAG. Ig-like V-type domains are found at residues 24–129 and 139–242; these read VPGE…YRIQ and PNIQ…REVT. The Extracellular segment spans residues 24 to 559; sequence VPGEAEQPAP…RKLPEPESRG (536 aa). 4 cysteine pairs are disulfide-bonded: Cys48-Cys116, Cys161-Cys223, Cys272-Cys320, and Cys365-Cys407. N-linked (GlcNAc...) asparagine glycosylation occurs at Asn56. 3 Ig-like C2-type domains span residues 244–330, 335–424, and 430–510; these read PVFY…TMIS, PQEL…QLVN, and PPWM…KNTS. Residues 278-299 form a disordered region; sequence PPPHFSISKQNPSTREAEEETT. N-linked (GlcNAc...) asparagine glycosylation is found at Asn418, Asn449, Asn467, Asn508, Asn518, Asn527, and Asn544. A disulfide bridge links Cys452 with Cys499. The interval 525–554 is disordered; the sequence is DSNTTTGLSTSTASPHTRANSTSTERKLPE. Polar residues predominate over residues 533-547; sequence STSTASPHTRANSTS. The helical transmembrane segment at 560–583 threads the bilayer; that stretch reads VVIVAVIVCILVLAVLGAVLYFLY. The Cytoplasmic segment spans residues 584–646; the sequence is KKGKLPCRRS…QGEKYIDLRH (63 aa). Phosphoserine is present on residues Ser606, Ser614, and Ser628. Residues 620 to 646 form a disordered region; it reads EMGLLQGSSGDKRAPGDQGEKYIDLRH. Residues 629–646 are compositionally biased toward basic and acidic residues; that stretch reads GDKRAPGDQGEKYIDLRH.

In terms of tissue distribution, detected in endothelial cells in vascular tissue throughout the body. May appear at the surface of neural crest cells during their embryonic migration. Appears to be limited to vascular smooth muscle in normal adult tissues. Associated with tumor progression and the development of metastasis in human malignant melanoma. Expressed most strongly on metastatic lesions and advanced primary tumors and is only rarely detected in benign melanocytic nevi and thin primary melanomas with a low probability of metastasis.

It is found in the membrane. Plays a role in cell adhesion, and in cohesion of the endothelial monolayer at intercellular junctions in vascular tissue. Its expression may allow melanoma cells to interact with cellular elements of the vascular system, thereby enhancing hematogeneous tumor spread. Could be an adhesion molecule active in neural crest cells during embryonic development. Acts as a surface receptor that triggers tyrosine phosphorylation of FYN and PTK2/FAK1, and a transient increase in the intracellular calcium concentration. The protein is Cell surface glycoprotein MUC18 (MCAM) of Homo sapiens (Human).